We begin with the raw amino-acid sequence, 1061 residues long: Isoleucine--tRNA ligase (1061 aa).

The 'HIGH' region motif lies at 50-60 (PYTSGSAHMGT). A 'KMSKS' region motif is present at residues 604–608 (KMSKS). Lysine 607 serves as a coordination point for ATP.

The protein belongs to the class-I aminoacyl-tRNA synthetase family. IleS type 2 subfamily. As to quaternary structure, monomer. Zn(2+) is required as a cofactor.

It is found in the cytoplasm. The catalysed reaction is tRNA(Ile) + L-isoleucine + ATP = L-isoleucyl-tRNA(Ile) + AMP + diphosphate. In terms of biological role, catalyzes the attachment of isoleucine to tRNA(Ile). As IleRS can inadvertently accommodate and process structurally similar amino acids such as valine, to avoid such errors it has two additional distinct tRNA(Ile)-dependent editing activities. One activity is designated as 'pretransfer' editing and involves the hydrolysis of activated Val-AMP. The other activity is designated 'posttransfer' editing and involves deacylation of mischarged Val-tRNA(Ile). This is Isoleucine--tRNA ligase from Natronomonas pharaonis (strain ATCC 35678 / DSM 2160 / CIP 103997 / JCM 8858 / NBRC 14720 / NCIMB 2260 / Gabara) (Halobacterium pharaonis).